The following is a 2414-amino-acid chain: Centrosome-associated protein CEP250 (2414 aa).

Coiled-coil stretches lie at residues 91-153 (EEPN…ELVR) and 248-357 (LVAK…VEEE). Disordered regions lie at residues 356–384 (EEDT…DPQD), 672–707 (AEEA…QETA), 1191–1212 (SRPE…DPDQ), 1269–1303 (EAQK…QNSL), 2050–2071 (AGAR…QERQ), 2194–2238 (ALEE…KERL), and 2275–2317 (RERR…GSSD). Polar residues predominate over residues 371–381 (QSDCNGLSQFD). Positions 400–1165 (QQAVQDLRQQ…QLEALVAEQQ (766 aa)) form a coiled coil. Residues 684–704 (RGTREEKEELKDKLSEAHHQQ) show a composition bias toward basic and acidic residues. Coiled coils occupy residues 1237-2200 (LQKL…EQQS) and 2231-2290 (GVEE…ASRA). Low complexity predominate over residues 1280–1289 (QDLQRQLSQS). Residues 2196-2209 (EEQQSGGPHSTSRA) are compositionally biased toward polar residues. Residues 2275–2286 (RERRKLKRDSVR) are compositionally biased toward basic and acidic residues. A Phosphoserine modification is found at Ser-2292. The span at 2305-2317 (QQDGRGSQRGSSD) shows a compositional bias: low complexity. Positions 2320–2345 (LVVELQREVALLRAQLALERKQRQDY) form a coiled coil. Ser-2389 and Ser-2393 each carry phosphoserine; by NEK2. The tract at residues 2390–2414 (LNQSLTSPGPCLLHPSLDTTQNTHR) is disordered.

As to quaternary structure, monomer and homodimer. Forms a complex in vitro with both NEK2 kinase and the PPP1CC catalytic subunit of protein phosphatase 1 (PP1). Interacts with CEP135. Interacts with CROCC/rootletin. Interacts with CNTLN. Interacts with NIN (via C-terminus). In terms of processing, differentially phosphorylated during cell cycle. Phosphorylation may regulate association/dissociation from centrosome. During M phase of mitosis, C-terminal part is phosphorylated by NEK2, suggesting that it may trigger the dissociation from the mitotic centrosome. Dephosphorylated in vitro by the PP1 phosphatase. In terms of tissue distribution, expressed in the retina.

The protein resides in the cytoplasm. The protein localises to the perinuclear region. It localises to the cytoskeleton. It is found in the microtubule organizing center. Its subcellular location is the centrosome. The protein resides in the centriole. The protein localises to the cilium basal body. It localises to the cell projection. It is found in the cilium. Its subcellular location is the photoreceptor outer segment. The protein resides in the photoreceptor inner segment. Plays an important role in centrosome cohesion during interphase. Recruits CCDC102B to the proximal ends of centrioles. Maintains centrosome cohesion by forming intercentriolar linkages. Accumulates at the proximal end of each centriole, forming supramolecular assemblies with viscous material properties that promote organelle cohesion. May be involved in ciliogenesis. The polypeptide is Centrosome-associated protein CEP250 (Cep250) (Mus musculus (Mouse)).